The sequence spans 207 residues: SPRY domain-containing protein 4 (207 aa).

The B30.2/SPRY domain occupies 12 to 206 (CRWGAKRLGV…THSGLEVPEG (195 aa)). Residues Lys-53 and Lys-130 each carry the N6-acetyllysine modification. Lys-139 bears the N6-succinyllysine mark.

This chain is SPRY domain-containing protein 4 (SPRYD4), found in Homo sapiens (Human).